The sequence spans 419 residues: uncharacterized protein (419 aa).

4 residues coordinate [4Fe-4S] cluster: Cys38, Cys44, Cys47, and Cys126. Gln250, Tyr280, Glu301, and Asp346 together coordinate S-adenosyl-L-methionine. Cys373 serves as the catalytic Nucleophile.

The protein belongs to the class I-like SAM-binding methyltransferase superfamily. RNA M5U methyltransferase family.

This is an uncharacterized protein from Prochlorococcus marinus (strain SARG / CCMP1375 / SS120).